The primary structure comprises 580 residues: 9,13-epoxylabda-14-ene synthase, chloroplastic (580 aa).

A chloroplast-targeting transit peptide spans 1 to 32 (MSITFNLKIAPFSGPGIQRSKETFPATEIQIT). Mg(2+) is bound by residues D322, D326, N466, T470, and E474. A DDXXD motif motif is present at residues 322-326 (DDFFD).

The protein belongs to the terpene synthase family. Requires Mg(2+) as cofactor. As to expression, present in both leaves and flowers, with higher levels in leaves.

It is found in the plastid. It localises to the chloroplast. The enzyme catalyses peregrinol diphosphate = (13R)-9,13-epoxylabd-14-ene + diphosphate. It catalyses the reaction (+)-copalyl diphosphate = miltiradiene + diphosphate. It carries out the reaction 8-hydroxycopalyl diphosphate = (13R)-manoyl oxide + diphosphate. Its pathway is secondary metabolite biosynthesis; terpenoid biosynthesis. Functionally, involved in the biosynthesis of labdane-type diterpenoid including marrubiin and other labdane-related furanoid diterpenoids with potential applications as anti-diabetics, analgesics or vasorelaxants. Terpene synthase the catalyzes the conversion of peregrinol diphosphate to 9,13(R)-epoxy-labd-14-ene, from (+)-copalyl diphosphate ((+)-CPP) to miltiradiene and from 8-hydroxycopalyl diphosphate (LPP, labda-13-en-8-ol diphosphate) to manoyl oxide. This chain is 9,13-epoxylabda-14-ene synthase, chloroplastic, found in Marrubium vulgare (White horehound).